Consider the following 633-residue polypeptide: Phosphomethylpyrimidine synthase (633 aa).

Residues Asn-245, Met-274, Tyr-303, His-339, 359–361 (SRG), 400–403 (DGLR), and Glu-439 contribute to the substrate site. His-443 provides a ligand contact to Zn(2+). Tyr-466 serves as a coordination point for substrate. Position 507 (His-507) interacts with Zn(2+). 3 residues coordinate [4Fe-4S] cluster: Cys-587, Cys-590, and Cys-595.

It belongs to the ThiC family. In terms of assembly, homodimer. It depends on [4Fe-4S] cluster as a cofactor.

It carries out the reaction 5-amino-1-(5-phospho-beta-D-ribosyl)imidazole + S-adenosyl-L-methionine = 4-amino-2-methyl-5-(phosphooxymethyl)pyrimidine + CO + 5'-deoxyadenosine + formate + L-methionine + 3 H(+). It functions in the pathway cofactor biosynthesis; thiamine diphosphate biosynthesis. In terms of biological role, catalyzes the synthesis of the hydroxymethylpyrimidine phosphate (HMP-P) moiety of thiamine from aminoimidazole ribotide (AIR) in a radical S-adenosyl-L-methionine (SAM)-dependent reaction. This Neisseria meningitidis serogroup B (strain ATCC BAA-335 / MC58) protein is Phosphomethylpyrimidine synthase.